A 252-amino-acid polypeptide reads, in one-letter code: Two-component response regulator ORR2 (252 aa).

A Response regulatory domain is found at 7-157 (RVLVVDDSPV…DVQRLRKCSG (151 aa)). Position 90 is a 4-aspartylphosphate (Asp90).

This sequence belongs to the ARR family. Type-A subfamily. Post-translationally, two-component system major event consists of a His-to-Asp phosphorelay between a sensor histidine kinase (HK) and a response regulator (RR). In plants, the His-to-Asp phosphorelay involves an additional intermediate named Histidine-containing phosphotransfer protein (HPt). This multistep phosphorelay consists of a His-Asp-His-Asp sequential transfer of a phosphate group between first a His and an Asp of the HK protein, followed by the transfer to a conserved His of the HPt protein and finally the transfer to an Asp in the receiver domain of the RR protein. As to expression, expressed in mature leaves and flowers, and at low levels in roots and shoots.

Functions as a response regulator involved in His-to-Asp phosphorelay signal transduction system. Phosphorylation of the Asp residue in the receiver domain activates the ability of the protein to promote the transcription of target genes. Type-A response regulators seem to act as negative regulators of the cytokinin signaling. The sequence is that of Two-component response regulator ORR2 from Oryza sativa subsp. indica (Rice).